We begin with the raw amino-acid sequence, 137 residues long: Holo-[acyl-carrier-protein] synthase (137 aa).

Mg(2+) is bound by residues D8 and E58.

This sequence belongs to the P-Pant transferase superfamily. AcpS family. Mg(2+) is required as a cofactor.

Its subcellular location is the cytoplasm. It carries out the reaction apo-[ACP] + CoA = holo-[ACP] + adenosine 3',5'-bisphosphate + H(+). In terms of biological role, transfers the 4'-phosphopantetheine moiety from coenzyme A to a Ser of acyl-carrier-protein. In Lactobacillus delbrueckii subsp. bulgaricus (strain ATCC BAA-365 / Lb-18), this protein is Holo-[acyl-carrier-protein] synthase.